Here is a 599-residue protein sequence, read N- to C-terminus: Kelch-like protein 41a (599 aa).

The 71-residue stretch at 32–102 (VDCILKVGDR…LYSADIDITD (71 aa)) folds into the BTB domain. Positions 137 to 239 (CLAIFRMGLV…PEKYLKEKVE (103 aa)) constitute a BACK domain. 5 Kelch repeats span residues 339-391 (LLYV…EFEN), 393-440 (LFAV…SQNG), 441-488 (LVYC…VHKG), 489-535 (KIVV…SVDG), and 537-591 (LYAV…SMRL).

It localises to the cytoplasm. Its subcellular location is the cytoskeleton. The protein localises to the sarcoplasmic reticulum membrane. It is found in the endoplasmic reticulum membrane. Involved in skeletal muscle development and differentiation. The sequence is that of Kelch-like protein 41a (klhl41a) from Danio rerio (Zebrafish).